A 479-amino-acid chain; its full sequence is Siroheme synthase (479 aa).

Residues 1 to 202 (MNYLPIFLDL…GRDSEAEAQL (202 aa)) form a precorrin-2 dehydrogenase /sirohydrochlorin ferrochelatase region. Residues 22–23 (ET) and 43–44 (PA) contribute to the NAD(+) site. Position 128 is a phosphoserine (Ser-128). The interval 217-479 (GEVYLVGAGP…TPLEAPDHLA (263 aa)) is uroporphyrinogen-III C-methyltransferase. Pro-226 serves as a coordination point for S-adenosyl-L-methionine. Residue Asp-249 is the Proton acceptor of the active site. Catalysis depends on Lys-271, which acts as the Proton donor. Residues 302 to 304 (GGD), Ile-307, 332 to 333 (TA), Met-384, and Gly-413 each bind S-adenosyl-L-methionine.

It in the N-terminal section; belongs to the precorrin-2 dehydrogenase / sirohydrochlorin ferrochelatase family. In the C-terminal section; belongs to the precorrin methyltransferase family.

The catalysed reaction is uroporphyrinogen III + 2 S-adenosyl-L-methionine = precorrin-2 + 2 S-adenosyl-L-homocysteine + H(+). It carries out the reaction precorrin-2 + NAD(+) = sirohydrochlorin + NADH + 2 H(+). The enzyme catalyses siroheme + 2 H(+) = sirohydrochlorin + Fe(2+). Its pathway is cofactor biosynthesis; adenosylcobalamin biosynthesis; precorrin-2 from uroporphyrinogen III: step 1/1. It participates in cofactor biosynthesis; adenosylcobalamin biosynthesis; sirohydrochlorin from precorrin-2: step 1/1. The protein operates within porphyrin-containing compound metabolism; siroheme biosynthesis; precorrin-2 from uroporphyrinogen III: step 1/1. It functions in the pathway porphyrin-containing compound metabolism; siroheme biosynthesis; siroheme from sirohydrochlorin: step 1/1. Its pathway is porphyrin-containing compound metabolism; siroheme biosynthesis; sirohydrochlorin from precorrin-2: step 1/1. Its function is as follows. Multifunctional enzyme that catalyzes the SAM-dependent methylations of uroporphyrinogen III at position C-2 and C-7 to form precorrin-2 via precorrin-1. Then it catalyzes the NAD-dependent ring dehydrogenation of precorrin-2 to yield sirohydrochlorin. Finally, it catalyzes the ferrochelation of sirohydrochlorin to yield siroheme. In Thiobacillus denitrificans (strain ATCC 25259 / T1), this protein is Siroheme synthase.